The primary structure comprises 599 residues: Elongation factor 4 (599 aa).

Residues 5–187 (SHIRNFSIVA…SIVQNLPAPK (183 aa)) form the tr-type G domain. GTP-binding positions include 17-22 (DHGKST) and 134-137 (NKID).

Belongs to the TRAFAC class translation factor GTPase superfamily. Classic translation factor GTPase family. LepA subfamily.

Its subcellular location is the cell inner membrane. The catalysed reaction is GTP + H2O = GDP + phosphate + H(+). Its function is as follows. Required for accurate and efficient protein synthesis under certain stress conditions. May act as a fidelity factor of the translation reaction, by catalyzing a one-codon backward translocation of tRNAs on improperly translocated ribosomes. Back-translocation proceeds from a post-translocation (POST) complex to a pre-translocation (PRE) complex, thus giving elongation factor G a second chance to translocate the tRNAs correctly. Binds to ribosomes in a GTP-dependent manner. The chain is Elongation factor 4 from Roseobacter denitrificans (strain ATCC 33942 / OCh 114) (Erythrobacter sp. (strain OCh 114)).